The primary structure comprises 113 residues: Protein INCREASED RESISTANCE TO MYZUS PERSICAE 1 (113 aa).

Residues 56-100 form an FLZ-type zinc finger; that stretch reads DFLKTCSLCNRSLCHHRDIYMYRGNNAFCSLECREKQIKLDEKKA.

This sequence belongs to the FLZ family. Interacts with KIN10 and KIN11 via its FLZ-type zinc finger domain. Interacts with KINB3 via its N-terminal part. Interacts with GEBP.

It localises to the nucleus. It is found in the cytoplasm. Its function is as follows. May act as an adapter to facilitate the interaction of SnRK1 complex with effector proteins, conferring tissue- and stimulus-type specific differences in the SnRK1 regulation pathway. This Arabidopsis thaliana (Mouse-ear cress) protein is Protein INCREASED RESISTANCE TO MYZUS PERSICAE 1.